We begin with the raw amino-acid sequence, 83 residues long: Toxin TdNa5 (83 aa).

The N-terminal stretch at 1–20 (MKTIIFFIACLMLIDVVVES) is a signal peptide. The 62-residue stretch at 21–82 (KDGYIIEHRG…IFDSNNNKCG (62 aa)) folds into the LCN-type CS-alpha/beta domain. Cystine bridges form between cysteine 31–cysteine 81, cysteine 35–cysteine 57, cysteine 43–cysteine 62, and cysteine 47–cysteine 64. Cysteine 81 bears the Cysteine amide mark.

This sequence belongs to the long (4 C-C) scorpion toxin superfamily. Sodium channel inhibitor family. Beta subfamily. Expressed by the venom gland.

The protein resides in the secreted. Its function is as follows. Inhibits the sodium currents (Nav) in an apparent irreversible manner. Produces small depolarization and induces repetitive firing in squid axons. Is specific for arthropods (crickets, triatomides, crabs and squids), but is non-toxic to mice. Shows antibacterial activity against both Gram-positive and Gram-negative bacteria. In Tityus discrepans (Venezuelan scorpion), this protein is Toxin TdNa5.